A 305-amino-acid polypeptide reads, in one-letter code: Aquaporin-1 (305 aa).

Residues 1–34 (MSSNDSNDTDKQHTRLDPTGVDDAYIPPEQPETK) form a disordered region. Residues 1–48 (MSSNDSNDTDKQHTRLDPTGVDDAYIPPEQPETKHHRFKISKDTLRNH) lie on the Cytoplasmic side of the membrane. A helical membrane pass occupies residues 49 to 69 (FIAAAGEFCGTFMFLWCAYVI). Over 70–91 (CNVANHDVALVAAPDGSHPGQL) the chain is Extracellular. The helical transmembrane segment at 92 to 112 (IMIAIGFGFSVMFSIWCFAGV) threads the bilayer. Over 113-136 (SGGALNPAMSLSLCLARAVSPTRC) the chain is Cytoplasmic. The NPA 1 signature appears at 118-120 (NPA). Residues 137–157 (VVMWVSQIVAGMAAGGAASAM) traverse the membrane as a helical segment. The Extracellular portion of the chain corresponds to 158-176 (TPGEVLFANSLGLGCSRTR). The helical transmembrane segment at 177-197 (GLFLEMFGTAILCLTVLMTAV) threads the bilayer. Residues 198 to 203 (EKRETN) lie on the Cytoplasmic side of the membrane. The chain crosses the membrane as a helical span at residues 204–224 (FMAALPIGISLFIAHVALTAY). Residues 225-248 (TGTGVNPARSLGAAVAARYFPHYH) are Extracellular-facing. Residues 230–232 (NPA) carry the NPA 2 motif. Residues 249–269 (WIYWIGTLLGSILAWSVWQLL) traverse the membrane as a helical segment. The Cytoplasmic segment spans residues 270–305 (QILDYTTYVTAEKAASTKEKAQKKGETSSSSAVAEV). The span at 286 to 295 (TKEKAQKKGE) shows a compositional bias: basic and acidic residues. The interval 286-305 (TKEKAQKKGETSSSSAVAEV) is disordered. Positions 296–305 (TSSSSAVAEV) are enriched in polar residues.

Belongs to the MIP/aquaporin (TC 1.A.8) family.

The protein localises to the endoplasmic reticulum membrane. It is found in the cell membrane. Functionally, water channel required to facilitate the transport of water across membranes. Involved in sporulation, freeze tolerance and osmotolerance. Is non-functional in most laboratory strains. In Saccharomyces cerevisiae (strain YJM789) (Baker's yeast), this protein is Aquaporin-1 (AQY1).